A 234-amino-acid polypeptide reads, in one-letter code: N-acetyl-alpha-D-glucosaminyl L-malate deacetylase 1 (234 aa).

Zn(2+) is bound by residues histidine 12, aspartate 15, and histidine 113.

This sequence belongs to the PIGL family. Zn(2+) is required as a cofactor.

It catalyses the reaction (S)-malyl N-acetyl-alpha-D-glucosaminide + H2O = (S)-malyl alpha-D-glucosaminide + acetate. With respect to regulation, inhibited by BSH. Its function is as follows. Involved in bacillithiol (BSH) biosynthesis. Catalyzes the second step of the pathway, the deacetylation of N-acetylglucosaminylmalate (GlcNAc-Mal) to glucosamine malate (GlcN-Mal). The sequence is that of N-acetyl-alpha-D-glucosaminyl L-malate deacetylase 1 from Bacillus anthracis.